Consider the following 263-residue polypeptide: Acetylglutamate kinase (263 aa).

Substrate-binding positions include 48 to 49 (GG), R70, and N162.

Belongs to the acetylglutamate kinase family. ArgB subfamily.

The protein resides in the cytoplasm. The catalysed reaction is N-acetyl-L-glutamate + ATP = N-acetyl-L-glutamyl 5-phosphate + ADP. It functions in the pathway amino-acid biosynthesis; L-arginine biosynthesis; N(2)-acetyl-L-ornithine from L-glutamate: step 2/4. Its function is as follows. Catalyzes the ATP-dependent phosphorylation of N-acetyl-L-glutamate. The protein is Acetylglutamate kinase of Vibrio vulnificus (strain YJ016).